The following is a 265-amino-acid chain: C-type lectin domain family 12 member A (265 aa).

Topologically, residues 1–43 (MSEEVTYADLQFQNSSEMEKIPEIGKFGEKAPPAPSHVWRPAA) are cytoplasmic. The ITIM motif motif lies at 5–10 (VTYADL). Y7 is subject to Phosphotyrosine. Residues 44 to 64 (LFLTLLCLLLLIGLGVLASMF) form a helical; Signal-anchor for type II membrane protein membrane-spanning segment. At 65–265 (HVTLKIEMKK…QLGSTYFREA (201 aa)) the chain is on the extracellular side. 2 N-linked (GlcNAc...) asparagine glycosylation sites follow: N88 and N98. Intrachain disulfides connect C118–C130, C133–C144, C161–C248, and C227–C240. The 110-residue stretch at 140 to 249 (HKDSCYFLSD…CTYKKRMICE (110 aa)) folds into the C-type lectin domain. Residue N165 is glycosylated (N-linked (GlcNAc...) asparagine).

Homodimer; disulfide-linked. Interacts (when the ITIM motif is phosphorylated) with PTPN6 and PTPN11. In terms of processing, phosphorylated at Tyr-7 by SRC in the ITIM motif following ligand-binding, promoting recruitment of tyrosine-protein phosphatases PTPN6 and PTPN11. Post-translationally, highly N-glycosylated; glycosylation varies between cell types. Preferentially expressed in lymphoid tissues and immune cells, including natural killer (NK) cells, T-cells, dendritic cells and monocytes or macrophages. Detected in spleen macrophage-rich red pulp and in lymph node (at protein level). Detected in peripheral blood leukocytes, dendritic cells, bone marrow, monocytes, mononuclear leukocytes and macrophages.

The protein resides in the cell membrane. Its function is as follows. Myeloid inhibitory C-type lectin receptor that acts as a negative regulator of myeloid cell activation. Myeloid cell inhibition is required to limit proinflammatory pathways and protect against excessive inflammation. Specifically recognizes and binds various structures, such as neutrophil extracellular traps (NETs) or monosodium urate crystals. Also acts as a pattern-recognition receptor for pathogen-associated molecules, such as plasmodium hemozoin or mycobacterial micolic acid. Ligand-binding induces phosphorylation of its ITIM motif, followed by recruitment of tyrosine-protein phosphatases PTPN6 and PTPN11, which counteract tyrosine-protein kinase SYK, thereby preventing myeloid cell activation. Acts as a pattern-recognition receptor for NETs in neutrophils: specifically recognizes DNA in NETs, leading to inhibit neutrophil activation and limit further NET formation. This regulation is essential for controlling key neutrophil responses and limit NET-mediated inflammatory conditions. Also recognizes dead cells by acting as a receptor for monosodium urate crystals, leading to down-regulate neutrophil activation. Binding to monosodium urate crystals also promotes the type I interferon response. Acts as an inhibitor of natural killer (NK) cell cytotoxicity. Also acts as an ihibitor of dendritic cell maturation in an IL10-dependent manner. This Homo sapiens (Human) protein is C-type lectin domain family 12 member A.